A 270-amino-acid polypeptide reads, in one-letter code: Acetylglutamate kinase (270 aa).

Substrate contacts are provided by residues 41–42 (GG), Arg63, and Asn166.

It belongs to the acetylglutamate kinase family. ArgB subfamily.

It is found in the cytoplasm. The enzyme catalyses N-acetyl-L-glutamate + ATP = N-acetyl-L-glutamyl 5-phosphate + ADP. The protein operates within amino-acid biosynthesis; L-arginine biosynthesis; N(2)-acetyl-L-ornithine from L-glutamate: step 2/4. Its function is as follows. Catalyzes the ATP-dependent phosphorylation of N-acetyl-L-glutamate. This Anaeromyxobacter dehalogenans (strain 2CP-C) protein is Acetylglutamate kinase.